A 713-amino-acid polypeptide reads, in one-letter code: Polyribonucleotide nucleotidyltransferase (713 aa).

Mg(2+) contacts are provided by Asp485 and Asp491. The KH domain occupies 552-611 (PRIYTMKIDPKKIKDVIGKGGATVRSLTEETGTSIDIDDDGTVKIAAVDKNAVQEVMSRI). Positions 621–689 (GVVYKGKVTR…RQGRIRLTMK (69 aa)) constitute an S1 motif domain. The interval 694–713 (DQTKNEENLLQSEEGSPVQE) is disordered. Over residues 701–713 (NLLQSEEGSPVQE) the composition is skewed to polar residues.

This sequence belongs to the polyribonucleotide nucleotidyltransferase family. As to quaternary structure, component of the RNA degradosome, which is a multiprotein complex involved in RNA processing and mRNA degradation. Mg(2+) serves as cofactor.

Its subcellular location is the cytoplasm. The enzyme catalyses RNA(n+1) + phosphate = RNA(n) + a ribonucleoside 5'-diphosphate. Its function is as follows. Involved in mRNA degradation. Catalyzes the phosphorolysis of single-stranded polyribonucleotides processively in the 3'- to 5'-direction. This chain is Polyribonucleotide nucleotidyltransferase, found in Histophilus somni (strain 2336) (Haemophilus somnus).